Consider the following 296-residue polypeptide: Glycine N-acyltransferase (296 aa).

N6-acetyllysine; alternate is present on residues Lys-16, Lys-127, and Lys-141. An N6-succinyllysine; alternate mark is found at Lys-16, Lys-127, and Lys-141. Lys-159 bears the N6-acetyllysine mark. Lys-169 bears the N6-succinyllysine mark. Lys-183 and Lys-256 each carry N6-acetyllysine; alternate. Residues Lys-183 and Lys-256 each carry the N6-succinyllysine; alternate modification.

The protein belongs to the glycine N-acyltransferase family.

The protein localises to the mitochondrion. It carries out the reaction an acyl-CoA + glycine = an N-acylglycine + CoA + H(+). It catalyses the reaction benzoyl-CoA + glycine = N-benzoylglycine + CoA + H(+). Functionally, mitochondrial acyltransferase which transfers an acyl group to the N-terminus of glycine and glutamine, although much less efficiently. Can conjugate a multitude of substrates to form a variety of N-acylglycines, thereby detoxify xenobiotics, such as benzoic acid or salicylic acid, and endogenous organic acids, such as isovaleric acid. This Pongo abelii (Sumatran orangutan) protein is Glycine N-acyltransferase (GLYAT).